We begin with the raw amino-acid sequence, 251 residues long: Flap endonuclease Xni (251 aa).

D104 lines the Mg(2+) pocket. The region spanning 160 to 250 (VLPRQLPDYW…SGNLQQLRLK (91 aa)) is the 5'-3' exonuclease domain. The K(+) site is built by L171, A172, P180, V182, and V185. An interaction with DNA region spans residues 184–189 (GVGAKT).

This sequence belongs to the Xni family. Requires Mg(2+) as cofactor. K(+) is required as a cofactor.

In terms of biological role, has flap endonuclease activity. During DNA replication, flap endonucleases cleave the 5'-overhanging flap structure that is generated by displacement synthesis when DNA polymerase encounters the 5'-end of a downstream Okazaki fragment. The protein is Flap endonuclease Xni of Yersinia pseudotuberculosis serotype I (strain IP32953).